The following is a 146-amino-acid chain: Flavodoxin (146 aa).

In terms of domain architecture, Flavodoxin-like spans 4–143 (ALIVYGSTTG…EVLDWAREVL (140 aa)).

Belongs to the flavodoxin family. FMN is required as a cofactor.

Functionally, electron-transfer proteins that function in various electron transport systems in microorganisms. Functionally interchangeable with ferredoxin. The protein is Flavodoxin of Megalodesulfovibrio gigas (strain ATCC 19364 / DSM 1382 / NCIMB 9332 / VKM B-1759) (Desulfovibrio gigas).